Here is a 237-residue protein sequence, read N- to C-terminus: Opacity protein opA57 (237 aa).

Residue Ala1 is a signal peptide.

The protein belongs to the opacity porin family.

It is found in the cell outer membrane. In terms of biological role, implicated in a number of adherence functions. OPA proteins are implicated in pathogenesis and are subject to phase variation. The sequence is that of Opacity protein opA57 (opaK) from Neisseria gonorrhoeae.